A 598-amino-acid chain; its full sequence is Ceramide transfer protein (598 aa).

Residues 1–11 (MSDNQSWNSSG) are compositionally biased toward polar residues. Residues 1–24 (MSDNQSWNSSGSEEDPETESGPPV) form a disordered region. The PH domain occupies 23–117 (PVERCGVLSK…WIDAIEQHKT (95 aa)). Phosphoserine is present on Ser126. Ser132 carries the phosphoserine; by PKD modification. Ser135 is subject to Phosphoserine. The tract at residues 202-221 (DDEDDFPTTRSDGDFLHNTN) is disordered. A coiled-coil region spans residues 268–301 (KREESWQKRHDKEMEKRRRLEEAYKNAMAELKKK). Ser315 is modified (phosphoserine). Residues 321–327 (EFFDAVE) carry the FFAT motif. Residues 363-592 (GTHRFVQKVE…FTSYVQEKTA (230 aa)) form the START domain. An N-acylsphing-4-enine is bound by residues Glu446, Gln467, Asn504, and Tyr553.

In terms of assembly, interacts with VAPA and VAPB. Interaction with VAPB is less efficient than with VAPA. Interacts (via FFAT motif) with the MOSPD2 (via MSP domain). In terms of processing, phosphorylation on Ser-132 decreases the affinity toward phosphatidylinositol 4-phosphate at Golgi membranes and reduces ceramide transfer activity. Inactivated by hyperphosphorylation of serine residues by CSNK1G2/CK1 that triggers dissociation from the Golgi complex, thus down-regulating ER-to-Golgi transport of ceramide and sphingomyelin synthesis.

The protein resides in the cytoplasm. It is found in the golgi apparatus. It localises to the endoplasmic reticulum. The enzyme catalyses N-hexadecanoylsphing-4-enine(in) = N-hexadecanoylsphing-4-enine(out). Functionally, shelters ceramides and diacylglycerol lipids inside its START domain and mediates the intracellular trafficking of ceramides and diacylglycerol lipids in a non-vesicular manner. This is Ceramide transfer protein (CERT1) from Cricetulus griseus (Chinese hamster).